Here is a 570-residue protein sequence, read N- to C-terminus: Periplasmic trehalase (570 aa).

The signal sequence occupies residues Met-1–Ala-34. Substrate contacts are provided by residues Arg-159, Trp-166 to Asp-167, Asn-203, Arg-212 to Gln-214, Arg-284 to Glu-286, and Gly-317. Active-site proton donor/acceptor residues include Asp-319 and Glu-503. Glu-518 serves as a coordination point for substrate. The segment at Lys-544 to Gln-570 is disordered. Residues Pro-554–Gln-570 are compositionally biased toward low complexity.

It belongs to the glycosyl hydrolase 37 family. As to quaternary structure, monomer.

It localises to the periplasm. The enzyme catalyses alpha,alpha-trehalose + H2O = alpha-D-glucose + beta-D-glucose. Provides the cells with the ability to utilize trehalose at high osmolarity by splitting it into glucose molecules that can subsequently be taken up by the phosphotransferase-mediated uptake system. This is Periplasmic trehalase from Salmonella typhimurium (strain LT2 / SGSC1412 / ATCC 700720).